Reading from the N-terminus, the 37-residue chain is Cytochrome b6-f complex subunit 5 (37 aa).

The helical transmembrane segment at 5 to 25 (LLSGIILGLIPITICGLFFTA) threads the bilayer.

It belongs to the PetG family. The 4 large subunits of the cytochrome b6-f complex are cytochrome b6, subunit IV (17 kDa polypeptide, PetD), cytochrome f and the Rieske protein, while the 4 small subunits are PetG, PetL, PetM and PetN. The complex functions as a dimer.

It is found in the plastid. The protein resides in the chloroplast thylakoid membrane. In terms of biological role, component of the cytochrome b6-f complex, which mediates electron transfer between photosystem II (PSII) and photosystem I (PSI), cyclic electron flow around PSI, and state transitions. PetG is required for either the stability or assembly of the cytochrome b6-f complex. This Euglena gracilis protein is Cytochrome b6-f complex subunit 5.